The following is a 165-amino-acid chain: Lithostathine (165 aa).

The first 21 residues, 1 to 21, serve as a signal peptide directing secretion; sequence MTRNKYFILLSCLMVLSPSQG. Position 22 is a pyrrolidone carboxylic acid (Q22). The C-type lectin domain maps to 33–163; it reads ITCPEGSNAY…DAQLSFVCKF (131 aa). 3 cysteine pairs are disulfide-bonded: C35–C46, C63–C161, and C136–C153. Residue N129 is glycosylated (N-linked (GlcNAc...) asparagine).

In terms of tissue distribution, expressed only in regenerating islets, but not in normal pancreatic islets, insulinomas or regenerating liver.

The protein localises to the secreted. In terms of biological role, might act as an inhibitor of spontaneous calcium carbonate precipitation. The sequence is that of Lithostathine (Reg1) from Rattus norvegicus (Rat).